The chain runs to 292 residues: ATP synthase gamma chain (292 aa).

It belongs to the ATPase gamma chain family. F-type ATPases have 2 components, CF(1) - the catalytic core - and CF(0) - the membrane proton channel. CF(1) has five subunits: alpha(3), beta(3), gamma(1), delta(1), epsilon(1). CF(0) has three main subunits: a, b and c.

It localises to the cell inner membrane. Its function is as follows. Produces ATP from ADP in the presence of a proton gradient across the membrane. The gamma chain is believed to be important in regulating ATPase activity and the flow of protons through the CF(0) complex. The polypeptide is ATP synthase gamma chain (Magnetococcus marinus (strain ATCC BAA-1437 / JCM 17883 / MC-1)).